The primary structure comprises 329 residues: POU domain, class 5, transcription factor 2 (329 aa).

A compositionally biased stretch (polar residues) spans 1-14 (MAGRRSSNVFPLSG). Residues 1–24 (MAGRRSSNVFPLSGNSGGGLEVDT) are disordered. The POU-specific domain occupies 107 to 181 (DVSAIQKEME…LLKMWLEEVD (75 aa)). A DNA-binding region (homeobox) is located at residues 199–258 (RKRRRASRERRIGSNLEKLFLQCPEPTPQQISYIAGRLRLQKDLVQVWFSNRSQMGSWPT).

The protein belongs to the POU transcription factor family. Class-5 subfamily. As to expression, in adult brain, expressed in the olfactory bulb, becoming specifically concentrated in the mitral cell layer. Also found in the pyramidal cell layer of the hippocampus, in the granule cell layer of the cerebellum and in the cortex.

It is found in the nucleus. Functionally, transcription factor that binds preferentially to the octamer motif (5'-ATGTTAAT-3'). May exert a regulatory function in meiotic events that are required for terminal differentiation of male germ cell. The sequence is that of POU domain, class 5, transcription factor 2 (Pou5f2) from Mus musculus (Mouse).